A 529-amino-acid polypeptide reads, in one-letter code: Glucose transporter 2A (529 aa).

A disordered region spans residues 1-22; that stretch reads MTERRDNVSHAPDAIEGPNDGA. Residues 1-43 are Cytoplasmic-facing; the sequence is MTERRDNVSHAPDAIEGPNDGAHAEDTSPGFFSFENLGVAQVQ. A helical transmembrane segment spans residues 44 to 64; that stretch reads VVGGTLNGFSIGFVAVYILLY. The Extracellular segment spans residues 65–119; it reads EVATNCSLFKTTEACKAVGSYGCEWKDTEVCSWKKECDSDSDGVNPCESLIGYSS. The chain crosses the membrane as a helical span at residues 120-140; sequence LYSGIFASAMIVGSMVGSIIA. Residues 141 to 152 are Cytoplasmic-facing; that stretch reads GKCITMFGLKKS. A helical transmembrane segment spans residues 153-173; the sequence is FIIVGVMSVVASALNHISVAT. Topologically, residues 174-175 are extracellular; the sequence is NE. A helical transmembrane segment spans residues 176 to 196; that stretch reads FWVLCAGRVLMGIGLGVVCVI. The Cytoplasmic segment spans residues 197–214; that stretch reads CPMYVNENAHPKLSKVDG. A helical membrane pass occupies residues 215-235; the sequence is VLFQVFITFGIMLAAMLGLIL. Residues 236–250 are Extracellular-facing; the sequence is DKTVNYDNDPDMAGR. Residues 251 to 271 traverse the membrane as a helical segment; it reads FHGFCAVSSVLSVAMFLVGMF. At 272 to 300 the chain is on the cytoplasmic side; the sequence is LRESTATFSQDDDGKADGGMDPNEYGWGQ. A helical transmembrane segment spans residues 301-321; it reads MLWPLFMGAVTAGTLQLTGIN. The Extracellular segment spans residues 322-339; it reads AVMNYAPKITENLGMDPS. The chain crosses the membrane as a helical span at residues 340 to 360; sequence LGNFLVMAWNFVTSLVAIPLA. Over 361–368 the chain is Cytoplasmic; that stretch reads SRFTMRQM. A helical membrane pass occupies residues 369–389; sequence FITCSFVASCMCLFLCGIPVF. Over 390–404 the chain is Extracellular; it reads PGVAEEKVKNGVATT. A helical transmembrane segment spans residues 405 to 425; sequence GIALFIAAFEFGVGSCFFVLA. The Cytoplasmic portion of the chain corresponds to 426-439; that stretch reads QDLFPPSFRPKGSS. The helical transmembrane segment at 440-460 threads the bilayer; the sequence is FVVMMQFIFNILINLLYPITT. Topologically, residues 461-476 are extracellular; that stretch reads EAISGGATGDQDKGQA. The helical transmembrane segment at 477–497 threads the bilayer; that stretch reads VVFILFGLIGLICFVLQFFYL. The Cytoplasmic segment spans residues 498 to 529; sequence YPYDANQDHENDHGTEPVERILSPVDVPTPRN. The interval 508-529 is disordered; that stretch reads NDHGTEPVERILSPVDVPTPRN.

The protein belongs to the major facilitator superfamily. Sugar transporter (TC 2.A.1.1) family.

The protein resides in the membrane. Facilitative glucose transporter. This chain is Glucose transporter 2A (THT2A), found in Trypanosoma brucei brucei.